A 514-amino-acid chain; its full sequence is ATP synthase subunit alpha (514 aa).

170 to 177 is a binding site for ATP; sequence GDRQIGKT.

It belongs to the ATPase alpha/beta chains family. In terms of assembly, F-type ATPases have 2 components, CF(1) - the catalytic core - and CF(0) - the membrane proton channel. CF(1) has five subunits: alpha(3), beta(3), gamma(1), delta(1), epsilon(1). CF(0) has three main subunits: a(1), b(2) and c(9-12). The alpha and beta chains form an alternating ring which encloses part of the gamma chain. CF(1) is attached to CF(0) by a central stalk formed by the gamma and epsilon chains, while a peripheral stalk is formed by the delta and b chains.

It localises to the cell inner membrane. The catalysed reaction is ATP + H2O + 4 H(+)(in) = ADP + phosphate + 5 H(+)(out). In terms of biological role, produces ATP from ADP in the presence of a proton gradient across the membrane. The alpha chain is a regulatory subunit. The polypeptide is ATP synthase subunit alpha (Pseudomonas aeruginosa (strain LESB58)).